The chain runs to 635 residues: BTB/POZ domain-containing protein SETH6 (635 aa).

The region spanning 39–104 is the BTB domain; that stretch reads SDLTIEVGSA…CYGVGVQYNS (66 aa). An NPH3 domain is found at 206–494; that stretch reads DWWGRSLPIL…VQVLFYEQTR (289 aa). Residue Y435 is modified to Phosphotyrosine. Residues 604 to 635 are disordered; sequence QSVASSGKKHTEEKTNSERRFMFQKRRCHSVS. The span at 612-624 shows a compositional bias: basic and acidic residues; the sequence is KHTEEKTNSERRF. Over residues 625 to 635 the composition is skewed to basic residues; it reads MFQKRRCHSVS.

This sequence belongs to the NPH3 family.

It functions in the pathway protein modification; protein ubiquitination. Functionally, may act as a substrate-specific adapter of an E3 ubiquitin-protein ligase complex (CUL3-RBX1-BTB) which mediates the ubiquitination and subsequent proteasomal degradation of target proteins. This Arabidopsis thaliana (Mouse-ear cress) protein is BTB/POZ domain-containing protein SETH6 (SETH6).